The chain runs to 247 residues: Adenosylcobinamide-GDP ribazoletransferase (247 aa).

6 consecutive transmembrane segments (helical) span residues 34–54 (IVMF…IFIL), 59–79 (CGIP…TGGF), 113–133 (GGLA…ELAL), 138–158 (MLAA…LLMY), 171–191 (VFIG…AVIV), and 194–214 (VLLP…AIFI).

Belongs to the CobS family. The cofactor is Mg(2+).

Its subcellular location is the cell inner membrane. The enzyme catalyses alpha-ribazole + adenosylcob(III)inamide-GDP = adenosylcob(III)alamin + GMP + H(+). The catalysed reaction is alpha-ribazole 5'-phosphate + adenosylcob(III)inamide-GDP = adenosylcob(III)alamin 5'-phosphate + GMP + H(+). The protein operates within cofactor biosynthesis; adenosylcobalamin biosynthesis; adenosylcobalamin from cob(II)yrinate a,c-diamide: step 7/7. In terms of biological role, joins adenosylcobinamide-GDP and alpha-ribazole to generate adenosylcobalamin (Ado-cobalamin). Also synthesizes adenosylcobalamin 5'-phosphate from adenosylcobinamide-GDP and alpha-ribazole 5'-phosphate. The chain is Adenosylcobinamide-GDP ribazoletransferase from Salmonella schwarzengrund (strain CVM19633).